We begin with the raw amino-acid sequence, 20 residues long: NVRFDLSGATSSSYKTFIKN.

The tract at residues 1 to 20 is disordered; that stretch reads NVRFDLSGATSSSYKTFIKN. A compositionally biased stretch (polar residues) spans 8 to 20; it reads GATSSSYKTFIKN.

This sequence belongs to the ribosome-inactivating protein family. Type 1 RIP subfamily.

It carries out the reaction Endohydrolysis of the N-glycosidic bond at one specific adenosine on the 28S rRNA.. This Cucurbita pepo (Vegetable marrow) protein is Ribosome-inactivating protein.